Here is a 360-residue protein sequence, read N- to C-terminus: COP9 signalosome complex subunit 5 (360 aa).

Positions 60–197 (AKISALALLK…IGAFRTYPKD (138 aa)) constitute an MPN domain. Zn(2+) contacts are provided by histidine 143, histidine 145, and aspartate 156. The JAMM motif signature appears at 143–156 (HSHPGYGCWLSGID). Disordered regions lie at residues 293–315 (LMPS…RDSS) and 341–360 (SNKA…MVEA). Over residues 341 to 350 (SNKASTSAPD) the composition is skewed to polar residues.

The protein belongs to the peptidase M67A family. CSN5 subfamily. In terms of assembly, component of the CSN complex, probably composed of CSN1, CSN2, CSN3, CSN4, CSN5, CSN6, CSN7 and CSN8. Interacts with MCM2.

In terms of biological role, probable protease subunit of the COP9 signalosome complex (CSN), a complex involved in various cellular and developmental processes such as photomorphogenesis and response to hormones. The CSN complex is an essential regulator of the ubiquitin (Ubl) conjugation pathway by mediating the deneddylation of the cullin subunits of SCF-type E3 ligase complexes, leading to decrease the Ubl ligase activity of SCF. Involved in early response to iron deficiency. This chain is COP9 signalosome complex subunit 5, found in Oryza sativa subsp. japonica (Rice).